The sequence spans 258 residues: Ribosomal RNA small subunit methyltransferase A (258 aa).

The S-adenosyl-L-methionine site is built by H13, L15, G40, E61, D85, and N106.

This sequence belongs to the class I-like SAM-binding methyltransferase superfamily. rRNA adenine N(6)-methyltransferase family. RsmA subfamily.

Its subcellular location is the cytoplasm. The enzyme catalyses adenosine(1518)/adenosine(1519) in 16S rRNA + 4 S-adenosyl-L-methionine = N(6)-dimethyladenosine(1518)/N(6)-dimethyladenosine(1519) in 16S rRNA + 4 S-adenosyl-L-homocysteine + 4 H(+). Specifically dimethylates two adjacent adenosines (A1518 and A1519) in the loop of a conserved hairpin near the 3'-end of 16S rRNA in the 30S particle. May play a critical role in biogenesis of 30S subunits. The protein is Ribosomal RNA small subunit methyltransferase A of Porphyromonas gingivalis (strain ATCC 33277 / DSM 20709 / CIP 103683 / JCM 12257 / NCTC 11834 / 2561).